The sequence spans 235 residues: Large ribosomal subunit protein uL1 (235 aa).

Belongs to the universal ribosomal protein uL1 family. Part of the 50S ribosomal subunit.

Binds directly to 23S rRNA. The L1 stalk is quite mobile in the ribosome, and is involved in E site tRNA release. Its function is as follows. Protein L1 is also a translational repressor protein, it controls the translation of the L11 operon by binding to its mRNA. In Fusobacterium nucleatum subsp. nucleatum (strain ATCC 25586 / DSM 15643 / BCRC 10681 / CIP 101130 / JCM 8532 / KCTC 2640 / LMG 13131 / VPI 4355), this protein is Large ribosomal subunit protein uL1.